Reading from the N-terminus, the 691-residue chain is Probable serine/threonine-protein kinase pXi (691 aa).

The Protein kinase domain maps to 18–263 (YEIGSQIGNG…IDQTLKHPWI (246 aa)). ATP-binding positions include 24–32 (IGNGKFAQV) and lysine 47. Aspartate 137 functions as the Proton acceptor in the catalytic mechanism. Disordered regions lie at residues 314–350 (TPIK…ENEN), 420–447 (ENDS…KFTS), 510–536 (QHNN…GNGT), and 600–620 (GGSG…KKDK). Residues 322–336 (NNNNNNNNNNNNNNN) are compositionally biased toward low complexity. The span at 338 to 350 (ILDKKSNENENEN) shows a compositional bias: basic and acidic residues. Composition is skewed to low complexity over residues 423 to 433 (SSSSETYSSSS), 512 to 536 (NNNI…GNGT), and 600 to 615 (GGSG…TGGS). A coiled-coil region spans residues 642–691 (PKETMDKLASVLSNYKQKNQEKSLKVKYEKQKDKYKKLKSQLKKDKSLLK).

It belongs to the protein kinase superfamily. CAMK Ser/Thr protein kinase family.

It carries out the reaction L-seryl-[protein] + ATP = O-phospho-L-seryl-[protein] + ADP + H(+). The catalysed reaction is L-threonyl-[protein] + ATP = O-phospho-L-threonyl-[protein] + ADP + H(+). In Dictyostelium discoideum (Social amoeba), this protein is Probable serine/threonine-protein kinase pXi (pXi).